The sequence spans 303 residues: Probable acetylxylan esterase A (303 aa).

An N-terminal signal peptide occupies residues 1–23 (MLSTHLLFLATTLLTSLFHPIAA). Catalysis depends on S147, which acts as the Charge relay system. N-linked (GlcNAc...) asparagine glycosylation occurs at N189.

Belongs to the carbohydrate esterase 1 (CE1) family. AxeA subfamily. In terms of assembly, monomer.

Its subcellular location is the secreted. The catalysed reaction is Deacetylation of xylans and xylo-oligosaccharides.. Its pathway is glycan degradation; xylan degradation. Functionally, acetylxylan esterase involved in the hydrolysis of xylan, a major structural heterogeneous polysaccharide found in plant biomass representing the second most abundant polysaccharide in the biosphere, after cellulose. Degrades acetylated xylans by cleaving acetyl side groups from the hetero-xylan backbone. This Aspergillus niger (strain ATCC MYA-4892 / CBS 513.88 / FGSC A1513) protein is Probable acetylxylan esterase A (axeA).